Consider the following 126-residue polypeptide: UPF0102 protein gll3754 (126 aa).

The protein belongs to the UPF0102 family.

The chain is UPF0102 protein gll3754 from Gloeobacter violaceus (strain ATCC 29082 / PCC 7421).